The primary structure comprises 142 residues: ATP synthase F(0) complex subunit C3, mitochondrial (142 aa).

A mitochondrion-targeting transit peptide spans 1 to 67 (MFACAKLACT…REFQTSAISR (67 aa)). A helical membrane pass occupies residues 83-103 (VGVAGSGAGIGTVFGSLIIGY). Position 110 is an N6,N6,N6-trimethyllysine (K110). The chain crosses the membrane as a helical span at residues 118 to 138 (ILGFALSEAMGLFCLMVAFLI).

It belongs to the ATPase C chain family. In terms of assembly, F-type ATPases have 2 components, CF(1) - the catalytic core - and CF(0) - the membrane proton channel. CF(1) has five subunits: alpha(3), beta(3), gamma(1), delta(1), epsilon(1). CF(0) has three main subunits: a, b and c. Interacts with TMEM70 and TMEM242. Post-translationally, trimethylated by ATPSCKMT at Lys-110. Methylation is required for proper incorporation of the C subunit into the ATP synthase complex and mitochondrial respiration.

It localises to the mitochondrion membrane. Functionally, mitochondrial membrane ATP synthase (F(1)F(0) ATP synthase or Complex V) produces ATP from ADP in the presence of a proton gradient across the membrane which is generated by electron transport complexes of the respiratory chain. F-type ATPases consist of two structural domains, F(1) - containing the extramembraneous catalytic core and F(0) - containing the membrane proton channel, linked together by a central stalk and a peripheral stalk. During catalysis, ATP synthesis in the catalytic domain of F(1) is coupled via a rotary mechanism of the central stalk subunits to proton translocation. Part of the complex F(0) domain. A homomeric c-ring of probably 10 subunits is part of the complex rotary element. The sequence is that of ATP synthase F(0) complex subunit C3, mitochondrial from Homo sapiens (Human).